The following is a 401-amino-acid chain: MKPTEIKKPYRMEEFLRPQMFQEVAQMVHFQWRRNPVDNSMVNASMVPFCLSAFLNVLFFGCNGWDIIGHFWLGHPANQNPPVLSITIYFSIRGLMLYLKRKEIVEFVNDLDRECPRDLVSQLDMQMDETYRNFWQRYRFIRIYSHLGGPMFCVVPLALFLLTHEGKDTPVAQHEQLLGGWLPCGVRKDPNFYLLVWSFDLMCTTCGVSFFVTFDNLFNVMQGHLVMHLGHLARQFSAIDPRQSLTDEKRFFVDLRLLVQRQQLLNGLCRKYNDIFKVAFLVSNFVGAGSLCFYLFMLSETSDVLIIAQYILPTLVLVGFTFEICLRGTQLEKASEGLESSLRSQEWYLGSRRYRKFYLLWTQYCQRTQQLGAFGLIQVNMVHFTEIMQLAYRLFTFLKSH.

Residues 1 to 26 lie on the Cytoplasmic side of the membrane; sequence MKPTEIKKPYRMEEFLRPQMFQEVAQ. A helical transmembrane segment spans residues 27–47; the sequence is MVHFQWRRNPVDNSMVNASMV. Topologically, residues 48 to 52 are extracellular; it reads PFCLS. The chain crosses the membrane as a helical span at residues 53–73; that stretch reads AFLNVLFFGCNGWDIIGHFWL. The Cytoplasmic segment spans residues 74–142; that stretch reads GHPANQNPPV…NFWQRYRFIR (69 aa). The helical transmembrane segment at 143–163 threads the bilayer; it reads IYSHLGGPMFCVVPLALFLLT. At 164-191 the chain is on the extracellular side; that stretch reads HEGKDTPVAQHEQLLGGWLPCGVRKDPN. A helical transmembrane segment spans residues 192 to 212; the sequence is FYLLVWSFDLMCTTCGVSFFV. Residues 213 to 277 are Cytoplasmic-facing; the sequence is TFDNLFNVMQ…LCRKYNDIFK (65 aa). A helical transmembrane segment spans residues 278–298; it reads VAFLVSNFVGAGSLCFYLFML. Residues 299–303 are Extracellular-facing; the sequence is SETSD. A helical transmembrane segment spans residues 304–324; that stretch reads VLIIAQYILPTLVLVGFTFEI. At 325–370 the chain is on the cytoplasmic side; it reads CLRGTQLEKASEGLESSLRSQEWYLGSRRYRKFYLLWTQYCQRTQQ. A helical transmembrane segment spans residues 371–391; it reads LGAFGLIQVNMVHFTEIMQLA. The Extracellular segment spans residues 392 to 401; it reads YRLFTFLKSH.

Belongs to the insect chemoreceptor superfamily. Heteromeric odorant receptor channel (TC 1.A.69) family. Or49a subfamily. In terms of assembly, interacts with Orco. Complexes exist early in the endomembrane system in olfactory sensory neurons (OSNs), coupling these complexes to the conserved ciliary trafficking pathway. As to expression, expressed in olfactory sensory neurons in the antenna.

It is found in the cell membrane. In terms of biological role, odorant receptor which mediates acceptance or avoidance behavior, depending on its substrates. The odorant receptor repertoire encodes a large collection of odor stimuli that vary widely in identity, intensity, and duration. May form a complex with Orco to form odorant-sensing units, providing sensitive and prolonged odorant signaling and calcium permeability. The chain is Odorant receptor 88a (Or88a) from Drosophila melanogaster (Fruit fly).